Reading from the N-terminus, the 344-residue chain is Phenylalanine--tRNA ligase alpha subunit (344 aa).

Position 269 (Glu-269) interacts with Mg(2+).

Belongs to the class-II aminoacyl-tRNA synthetase family. Phe-tRNA synthetase alpha subunit type 1 subfamily. In terms of assembly, tetramer of two alpha and two beta subunits. It depends on Mg(2+) as a cofactor.

It localises to the cytoplasm. It carries out the reaction tRNA(Phe) + L-phenylalanine + ATP = L-phenylalanyl-tRNA(Phe) + AMP + diphosphate + H(+). The polypeptide is Phenylalanine--tRNA ligase alpha subunit (Ralstonia pickettii (strain 12J)).